Consider the following 196-residue polypeptide: UPF0340 protein TT_C0214 (196 aa).

This sequence belongs to the UPF0340 family.

The chain is UPF0340 protein TT_C0214 from Thermus thermophilus (strain ATCC BAA-163 / DSM 7039 / HB27).